Reading from the N-terminus, the 339-residue chain is Large ribosomal subunit protein uL11m (339 aa).

This sequence belongs to the universal ribosomal protein uL11 family.

The protein resides in the mitochondrion. The polypeptide is Large ribosomal subunit protein uL11m (RPL11) (Acanthamoeba castellanii (Amoeba)).